A 498-amino-acid chain; its full sequence is ATP synthase subunit beta, chloroplastic (498 aa).

G172–T179 lines the ATP pocket.

Belongs to the ATPase alpha/beta chains family. As to quaternary structure, F-type ATPases have 2 components, CF(1) - the catalytic core - and CF(0) - the membrane proton channel. CF(1) has five subunits: alpha(3), beta(3), gamma(1), delta(1), epsilon(1). CF(0) has four main subunits: a(1), b(1), b'(1) and c(9-12).

It is found in the plastid. The protein localises to the chloroplast thylakoid membrane. The enzyme catalyses ATP + H2O + 4 H(+)(in) = ADP + phosphate + 5 H(+)(out). In terms of biological role, produces ATP from ADP in the presence of a proton gradient across the membrane. The catalytic sites are hosted primarily by the beta subunits. The sequence is that of ATP synthase subunit beta, chloroplastic from Brasenia schreberi (Water shield).